The chain runs to 314 residues: Calcium homeostasis modulator protein 4 (314 aa).

At 1 to 14 (MCPTLNNIVSSLQR) the chain is on the cytoplasmic side. The helical transmembrane segment at 15–37 (NGIFINSLIAALTIGGQQLFSSS) threads the bilayer. Residues 38-48 (TFSCPCQVGKN) lie on the Extracellular side of the membrane. Disulfide bonds link Cys41/Cys131 and Cys43/Cys162. The helical transmembrane segment at 49–71 (FYYGSAFLVIPALILLVAGFALR) threads the bilayer. At 72–103 (SQMWTITGEYCCSCAPPYRRISPLECKLACLR) the chain is on the cytoplasmic side. Residues 104–129 (FFSITGRAVIAPLTWLAVTLLTGTYY) form a helical membrane-spanning segment. Residues 130-183 (ECAASEFASVDHYPMFDNVSASKREEILAGFPCCRSAPSDVILVRDEIALLHRY) are Extracellular-facing. Residues 184–207 (QSQMLGWILITLATIAALVSCCVA) form a helical membrane-spanning segment. Over 208–314 (KCCSPLTSLQ…DRSRGIELKP (107 aa)) the chain is Cytoplasmic.

Belongs to the CALHM family. In terms of assembly, oligomerizes to form decameric and undecameric channels. Two hemichannels can assemble in a tail-to-tail manner to form a gap junction. Placenta.

The protein localises to the cell membrane. Its function is as follows. May assemble to form gap junction channel-like structures involved in intercellular communication. Channel gating and ion conductance are likely regulated by membrane lipids rather than by membrane depolarization or extracellular calcium levels. This Homo sapiens (Human) protein is Calcium homeostasis modulator protein 4.